A 373-amino-acid chain; its full sequence is Dual-specificity RNA methyltransferase RlmN (373 aa).

E94 acts as the Proton acceptor in catalysis. One can recognise a Radical SAM core domain in the interval 100–339; it reads EDDRATLCVS…VIVRKTRGDD (240 aa). Residues C107 and C344 are joined by a disulfide bond. Residues C114, C118, and C121 each contribute to the [4Fe-4S] cluster site. S-adenosyl-L-methionine-binding positions include 168 to 169, S200, 222 to 224, and N301; these read GE and SIH. The active-site S-methylcysteine intermediate is the C344.

It belongs to the radical SAM superfamily. RlmN family. It depends on [4Fe-4S] cluster as a cofactor.

The protein resides in the cytoplasm. The catalysed reaction is adenosine(2503) in 23S rRNA + 2 reduced [2Fe-2S]-[ferredoxin] + 2 S-adenosyl-L-methionine = 2-methyladenosine(2503) in 23S rRNA + 5'-deoxyadenosine + L-methionine + 2 oxidized [2Fe-2S]-[ferredoxin] + S-adenosyl-L-homocysteine. It carries out the reaction adenosine(37) in tRNA + 2 reduced [2Fe-2S]-[ferredoxin] + 2 S-adenosyl-L-methionine = 2-methyladenosine(37) in tRNA + 5'-deoxyadenosine + L-methionine + 2 oxidized [2Fe-2S]-[ferredoxin] + S-adenosyl-L-homocysteine. Its function is as follows. Specifically methylates position 2 of adenine 2503 in 23S rRNA and position 2 of adenine 37 in tRNAs. m2A2503 modification seems to play a crucial role in the proofreading step occurring at the peptidyl transferase center and thus would serve to optimize ribosomal fidelity. The protein is Dual-specificity RNA methyltransferase RlmN of Shewanella denitrificans (strain OS217 / ATCC BAA-1090 / DSM 15013).